The following is a 624-amino-acid chain: Threonine--tRNA ligase (624 aa).

The interval methionine 1–glutamate 143 is editing domain. The tract at residues alanine 197–proline 499 is catalytic. Zn(2+) contacts are provided by cysteine 289, histidine 340, and histidine 467. The segment at leucine 598–arginine 624 is disordered.

It belongs to the class-II aminoacyl-tRNA synthetase family. Homodimer. Requires Zn(2+) as cofactor.

The protein resides in the cytoplasm. It catalyses the reaction tRNA(Thr) + L-threonine + ATP = L-threonyl-tRNA(Thr) + AMP + diphosphate + H(+). In terms of biological role, catalyzes the attachment of threonine to tRNA(Thr) in a two-step reaction: L-threonine is first activated by ATP to form Thr-AMP and then transferred to the acceptor end of tRNA(Thr). Also edits incorrectly charged L-seryl-tRNA(Thr). In Methanopyrus kandleri (strain AV19 / DSM 6324 / JCM 9639 / NBRC 100938), this protein is Threonine--tRNA ligase.